We begin with the raw amino-acid sequence, 334 residues long: Nucleoid-associated protein ESA_01050 (334 aa).

The protein belongs to the YejK family.

Its subcellular location is the cytoplasm. It localises to the nucleoid. In Cronobacter sakazakii (strain ATCC BAA-894) (Enterobacter sakazakii), this protein is Nucleoid-associated protein ESA_01050.